Consider the following 873-residue polypeptide: Paramyosin (873 aa).

A nonhelical region region spans residues 1–25 (MSSRSSKYMYKSSGGAGDISIEYGT). Residues 26–852 (DLGALTRLED…IRAKHRSWVT (827 aa)) adopt a coiled-coil conformation. The interval 853–873 (TSQVPGGTRQVFVTEESSQNF) is nonhelical region.

Belongs to the paramyosin family. In terms of assembly, homodimer. Binds IgG and collagen. As to expression, expressed in all tissues except in saliva.

Its subcellular location is the cytoplasm. The protein resides in the myofibril. In terms of biological role, paramyosin is a major structural component of many thick filaments isolated from invertebrate muscles. The chain is Paramyosin (PRM) from Rhipicephalus microplus (Cattle tick).